We begin with the raw amino-acid sequence, 310 residues long: Olfactory receptor 5AR1 (310 aa).

The Extracellular segment spans residues 1–25 (MDKENHSVVTEFVFMGITQDPQLQI). The N-linked (GlcNAc...) asparagine glycan is linked to asparagine 5. The chain crosses the membrane as a helical span at residues 26-46 (IFFVVFLLVYLVNVIGNVGMI). At 47–54 (ILIITDSQ) the chain is on the cytoplasmic side. A helical membrane pass occupies residues 55-75 (LHTPMYFFLCNLSFVDLGYSS). The Extracellular segment spans residues 76–99 (AIAPRMLADFLTKHKVISFSSCAT). An intrachain disulfide couples cysteine 97 to cysteine 189. A helical transmembrane segment spans residues 100–120 (QFAFFVGFVDAECYVLAAMAY). At 121 to 133 (DRFVAICRPLHYS) the chain is on the cytoplasmic side. Residues 134-154 (TLMSKKVCLVLMLGSYFAGLV) traverse the membrane as a helical segment. Residues 155–196 (SLVAHTSLTFSLSYCGSNIINHFFCEIPPLLALSCSDTYISE) are Extracellular-facing. Residues 197–217 (ILLFSLCGFIEFSTILIIFIS) traverse the membrane as a helical segment. Cysteine 203 is a Cu cation binding site. At 218 to 237 (YAFILIAIIRIRSAEGRLKA) the chain is on the cytoplasmic side. A helical transmembrane segment spans residues 238–258 (FSTCGSHLTGVTLFYGTVMFM). Positions 256 and 261 each coordinate Cu cation. Over 259 to 271 (YLRPTSSYSLDQD) the chain is Extracellular. The helical transmembrane segment at 272-292 (KWASVFYTIIIPMLNPLIYSL) threads the bilayer. The Cytoplasmic portion of the chain corresponds to 293 to 310 (RNKDVKAAFKKLIGKKPQ).

The protein belongs to the G-protein coupled receptor 1 family.

The protein resides in the cell membrane. Its activity is regulated as follows. Copper binding enhances receptor activity in response to odorant binding. In terms of biological role, olfactory receptor that is activated by the binding of organosulfur odorants with thioether groups such as (methylthio)methanethiol (MTMT). The activity of this receptor is mediated by G proteins which activate adenylyl cyclase. In Mus musculus (Mouse), this protein is Olfactory receptor 5AR1.